The primary structure comprises 614 residues: Phosphomethylpyrimidine synthase (614 aa).

Residues Asn226, Met255, Tyr284, His320, 340–342 (SRG), 381–384 (DGLR), and Glu420 contribute to the substrate site. Residue His424 coordinates Zn(2+). Tyr447 contacts substrate. His488 contributes to the Zn(2+) binding site. Residues Cys568, Cys571, and Cys576 each coordinate [4Fe-4S] cluster.

This sequence belongs to the ThiC family. As to quaternary structure, homodimer. [4Fe-4S] cluster is required as a cofactor.

The enzyme catalyses 5-amino-1-(5-phospho-beta-D-ribosyl)imidazole + S-adenosyl-L-methionine = 4-amino-2-methyl-5-(phosphooxymethyl)pyrimidine + CO + 5'-deoxyadenosine + formate + L-methionine + 3 H(+). The protein operates within cofactor biosynthesis; thiamine diphosphate biosynthesis. In terms of biological role, catalyzes the synthesis of the hydroxymethylpyrimidine phosphate (HMP-P) moiety of thiamine from aminoimidazole ribotide (AIR) in a radical S-adenosyl-L-methionine (SAM)-dependent reaction. This Acidovorax ebreus (strain TPSY) (Diaphorobacter sp. (strain TPSY)) protein is Phosphomethylpyrimidine synthase.